Consider the following 185-residue polypeptide: MEEAKVEAKDGTISVASAFSGHQQAVHDSDHKFLTQAVEEAYKGVDCGDGGPFGAVIVHNNEVVASCHNMVLKYTDPTAHAEVTAIREACKKLNKIELSECEIYASCEPCPMCFGAIHLSRLKRLVYGAKAEAAIAIGFDDFIADALRGTGVYQKSSLEIKKADGNGAAIAEQVFQNTKEKFRLY.

The 115-residue stretch at 28–142 folds into the CMP/dCMP-type deaminase domain; the sequence is DSDHKFLTQA…AAIAIGFDDF (115 aa). Histidine 80 serves as a coordination point for Zn(2+). Catalysis depends on glutamate 82, which acts as the Proton donor. Zn(2+) is bound by residues cysteine 110 and cysteine 113.

Belongs to the cytidine and deoxycytidylate deaminase family. Expressed in roots, leaves, flowers and siliques.

Its subcellular location is the cytoplasm. It is found in the nucleus. The enzyme catalyses guanosine + H2O + H(+) = xanthosine + NH4(+). Functionally, catalyzes the hydrolytic deamination of guanosine, producing xanthosine and ammonia. Deaminates exclusively guanosine and 2'-deoxyguanosine but no other aminated purines, pyrimidines, or pterines. Deamination of guanosine by GSDA is the only source of xanthosine production in Arabidopsis. This is Guanosine deaminase from Arabidopsis thaliana (Mouse-ear cress).